Reading from the N-terminus, the 213-residue chain is Imidazole glycerol phosphate synthase subunit HisH (213 aa).

Residues 4-213 (SIAIVDYGMG…LYRNFVHWKP (210 aa)) enclose the Glutamine amidotransferase type-1 domain. The active-site Nucleophile is Cys-83. Active-site residues include His-193 and Glu-195.

Heterodimer of HisH and HisF.

It is found in the cytoplasm. The catalysed reaction is 5-[(5-phospho-1-deoxy-D-ribulos-1-ylimino)methylamino]-1-(5-phospho-beta-D-ribosyl)imidazole-4-carboxamide + L-glutamine = D-erythro-1-(imidazol-4-yl)glycerol 3-phosphate + 5-amino-1-(5-phospho-beta-D-ribosyl)imidazole-4-carboxamide + L-glutamate + H(+). The enzyme catalyses L-glutamine + H2O = L-glutamate + NH4(+). It participates in amino-acid biosynthesis; L-histidine biosynthesis; L-histidine from 5-phospho-alpha-D-ribose 1-diphosphate: step 5/9. IGPS catalyzes the conversion of PRFAR and glutamine to IGP, AICAR and glutamate. The HisH subunit catalyzes the hydrolysis of glutamine to glutamate and ammonia as part of the synthesis of IGP and AICAR. The resulting ammonia molecule is channeled to the active site of HisF. This chain is Imidazole glycerol phosphate synthase subunit HisH, found in Burkholderia multivorans (strain ATCC 17616 / 249).